The chain runs to 464 residues: Protein FAM90A14 (464 aa).

Disordered regions lie at residues 1-42, 70-389, and 411-437; these read MMAR…DPRL, PATL…HDGA, and APSFHSPEKPGAFLAQSPHVSEKSEAP. 2 stretches are compositionally biased toward basic and acidic residues: residues 74 to 89 and 97 to 114; these read GKKEGKENLKPWKPRV and NKDKGEKEERPRQQDPQR. Positions 180–197 are enriched in low complexity; it reads LASLSPLRKASLSSSSSL.

It belongs to the FAM90 family.

The protein is Protein FAM90A14 of Homo sapiens (Human).